Reading from the N-terminus, the 105-residue chain is Venom metalloprotease inhibitor (105 aa).

Positions 1-21 (MFRFVCVLFIALVVFCTTTSA) are cleaved as a signal peptide. Intrachain disulfides connect Cys26-Cys61, Cys35-Cys57, Cys39-Cys50, Cys43-Cys83, and Cys63-Cys77. Residues 26 to 83 (CNRPNEEYRCGSACQTTCATLGQRCPIMNIRCNDACYCKEGYARYGDDTGMCVSISQC) enclose the TIL domain.

The protein belongs to the serine protease inhibitor-like (TIL domain-containing) family. As to expression, expressed by the venom gland.

The protein localises to the secreted. Its function is as follows. Inhibits metalloprotease (human MMP3), trypsin, chymotrypsin, plasmin and microbial serine protease (proteinase K). Exhibits antifibrinolytic activity by binding plasmin and inhibiting it. Does not inhibit elastase, thrombin or microbial serine protease (subtilisin A). The sequence is that of Venom metalloprotease inhibitor from Bombus ignitus (Bumblebee).